Consider the following 262-residue polypeptide: Thrombin-like enzyme calobin-1 (262 aa).

A signal peptide spans 1–18 (MVLISVLANLLILQLSYA). The propeptide occupies 19 to 24 (QKSSEL). Residues 25 to 253 (VIGGDECNIN…HLDWIQSIIA (229 aa)) enclose the Peptidase S1 domain. 6 disulfide bridges follow: Cys-31–Cys-165, Cys-52–Cys-68, Cys-100–Cys-260, Cys-144–Cys-214, Cys-176–Cys-193, and Cys-204–Cys-229. His-67 (charge relay system) is an active-site residue. Residue Asn-105 is glycosylated (N-linked (GlcNAc...) asparagine). Residue Asp-112 is the Charge relay system of the active site. Ser-208 (charge relay system) is an active-site residue.

This sequence belongs to the peptidase S1 family. Snake venom subfamily. In terms of assembly, monomer. In terms of processing, N-glycosylated. As to expression, expressed by the venom gland.

It localises to the secreted. Its activity is regulated as follows. Strongly inhibited by PMSF, and moderately by benzamidine and soybean trypsin inhibitor. Its function is as follows. Thrombin-like snake venom serine protease. Has a coagulant activity. Acts on alpha-chains of fibrinogen (FGA) generating fibrinopeptide A. This Gloydius ussuriensis (Ussuri mamushi) protein is Thrombin-like enzyme calobin-1.